Reading from the N-terminus, the 356-residue chain is MRVLGIETSCDETAAAVVTEGGDVLSDVVRSQVALHAPYGGVVPEVAARDHARAVVPVVREALSRAGVSAADLDGIAVTSRPGLAGALLVGLQAAKGLAWAAGKPLVGVDHLVGHLLAVFLRRGGAPLSDERERPSFPYVALLASGGHTAIYRVDGPALGAIRELGATRDDAAGEAFDKVAKLLGLGYPGGPVVDRLAAGGDAAAAADAVPALMARKESLEFSFSGIKSSVARHVAKRGRPEGQALRDLCAAFQGAVVDALVQKTVRAARAEGIGRVVLGGGVAANQGLRAKMAAACERRGLALFVPPLASCTDNGAMIAYAGALRLAAGERDTLDLAPETRTALPRVTRKGGGAR.

H111 and H115 together coordinate Fe cation. Substrate is bound by residues 143 to 147, D178, G191, D195, and N286; that span reads LASGG. Residue D314 coordinates Fe cation.

This sequence belongs to the KAE1 / TsaD family. Requires Fe(2+) as cofactor.

It localises to the cytoplasm. The catalysed reaction is L-threonylcarbamoyladenylate + adenosine(37) in tRNA = N(6)-L-threonylcarbamoyladenosine(37) in tRNA + AMP + H(+). Functionally, required for the formation of a threonylcarbamoyl group on adenosine at position 37 (t(6)A37) in tRNAs that read codons beginning with adenine. Is involved in the transfer of the threonylcarbamoyl moiety of threonylcarbamoyl-AMP (TC-AMP) to the N6 group of A37, together with TsaE and TsaB. TsaD likely plays a direct catalytic role in this reaction. This chain is tRNA N6-adenosine threonylcarbamoyltransferase, found in Sorangium cellulosum (strain So ce56) (Polyangium cellulosum (strain So ce56)).